A 204-amino-acid polypeptide reads, in one-letter code: Putative 3-methyladenine DNA glycosylase (204 aa).

The protein belongs to the DNA glycosylase MPG family.

The protein is Putative 3-methyladenine DNA glycosylase of Bacillus cytotoxicus (strain DSM 22905 / CIP 110041 / 391-98 / NVH 391-98).